The sequence spans 97 residues: Prophage lipoprotein Bor homolog (97 aa).

The N-terminal stretch at 1 to 16 is a signal peptide; that stretch reads MKKMLLATALALLITG. Cysteine 17 is lipidated: N-palmitoyl cysteine. Cysteine 17 carries the S-diacylglycerol cysteine lipid modification.

Belongs to the lambda phage bor family.

It localises to the cell membrane. This Escherichia coli (strain K12) protein is Prophage lipoprotein Bor homolog (borD).